Reading from the N-terminus, the 883-residue chain is Phosphoenolpyruvate carboxylase (883 aa).

Residues H138 and K546 contribute to the active site.

It belongs to the PEPCase type 1 family. The cofactor is Mg(2+).

It catalyses the reaction oxaloacetate + phosphate = phosphoenolpyruvate + hydrogencarbonate. Functionally, forms oxaloacetate, a four-carbon dicarboxylic acid source for the tricarboxylic acid cycle. The chain is Phosphoenolpyruvate carboxylase from Klebsiella pneumoniae (strain 342).